A 309-amino-acid chain; its full sequence is Glutaminase (309 aa).

Residues Ser-64, Asn-114, Glu-160, Asn-167, Tyr-191, Tyr-243, and Val-261 each contribute to the substrate site.

This sequence belongs to the glutaminase family. Homotetramer.

The enzyme catalyses L-glutamine + H2O = L-glutamate + NH4(+). This chain is Glutaminase, found in Rhodopseudomonas palustris (strain BisB18).